A 92-amino-acid chain; its full sequence is Putative regulatory protein CA_C1717 (92 aa).

Belongs to the RemA family.

The polypeptide is Putative regulatory protein CA_C1717 (Clostridium acetobutylicum (strain ATCC 824 / DSM 792 / JCM 1419 / IAM 19013 / LMG 5710 / NBRC 13948 / NRRL B-527 / VKM B-1787 / 2291 / W)).